A 280-amino-acid chain; its full sequence is Acetyl-coenzyme A carboxylase carboxyl transferase subunit beta (280 aa).

A CoA carboxyltransferase N-terminal domain is found at 24–280; the sequence is AWIKCDKCKN…IYTLIRHTHG (257 aa). 4 residues coordinate Zn(2+): Cys-28, Cys-31, Cys-47, and Cys-50. Residues 28 to 50 form a C4-type zinc finger; sequence CDKCKNILYIEDLLKNLKICPHC.

The protein belongs to the AccD/PCCB family. Acetyl-CoA carboxylase is a heterohexamer composed of biotin carboxyl carrier protein (AccB), biotin carboxylase (AccC) and two subunits each of ACCase subunit alpha (AccA) and ACCase subunit beta (AccD). Zn(2+) is required as a cofactor.

Its subcellular location is the cytoplasm. It carries out the reaction N(6)-carboxybiotinyl-L-lysyl-[protein] + acetyl-CoA = N(6)-biotinyl-L-lysyl-[protein] + malonyl-CoA. The protein operates within lipid metabolism; malonyl-CoA biosynthesis; malonyl-CoA from acetyl-CoA: step 1/1. Its function is as follows. Component of the acetyl coenzyme A carboxylase (ACC) complex. Biotin carboxylase (BC) catalyzes the carboxylation of biotin on its carrier protein (BCCP) and then the CO(2) group is transferred by the transcarboxylase to acetyl-CoA to form malonyl-CoA. The chain is Acetyl-coenzyme A carboxylase carboxyl transferase subunit beta from Sulfurihydrogenibium sp. (strain YO3AOP1).